The sequence spans 534 residues: Multicopper oxidase LPR1 homolog 3 (534 aa).

Cu cation contacts are provided by His-84 and His-86. N-linked (GlcNAc...) asparagine glycosylation occurs at Asn-109. Cu cation is bound by residues His-133 and His-135. In terms of domain architecture, Plastocyanin-like spans 219–291 (PFQAVQRRRY…VDFSLVVNPN (73 aa)). 6 N-linked (GlcNAc...) asparagine glycosylation sites follow: Asn-234, Asn-291, Asn-312, Asn-323, Asn-341, and Asn-372. Cu cation is bound by residues His-419, His-422, and His-424. Asn-450 is a glycosylation site (N-linked (GlcNAc...) asparagine). Cu cation-binding residues include His-515, Cys-516, His-517, His-521, and Met-526.

The protein belongs to the multicopper oxidase family. Requires Cu cation as cofactor. In terms of tissue distribution, expressed in roots and basal stems.

It is found in the endoplasmic reticulum membrane. Its function is as follows. Multicopper oxidase that may play a role in the maintenance of inorganic phosphate homeostasis. This is Multicopper oxidase LPR1 homolog 3 from Oryza sativa subsp. japonica (Rice).